We begin with the raw amino-acid sequence, 177 residues long: Probable adenylyl-sulfate kinase (177 aa).

12 to 19 (GLSGAGKT) lines the ATP pocket. Serine 86 (phosphoserine intermediate) is an active-site residue.

The protein belongs to the APS kinase family.

The catalysed reaction is adenosine 5'-phosphosulfate + ATP = 3'-phosphoadenylyl sulfate + ADP + H(+). It functions in the pathway sulfur metabolism; hydrogen sulfide biosynthesis; sulfite from sulfate: step 2/3. Functionally, catalyzes the synthesis of activated sulfate. This Synechocystis sp. (strain ATCC 27184 / PCC 6803 / Kazusa) protein is Probable adenylyl-sulfate kinase (cysC).